Here is a 1262-residue protein sequence, read N- to C-terminus: Collagen alpha-1(III) chain (1262 aa).

An N-terminal signal peptide occupies residues 1–23 (MMSFVQKVSLFILAVFQPSVILA). Positions 24 to 150 (QQDALGGCTH…PSISGGSFSP (127 aa)) are cleaved as a propeptide — N-terminal propeptide. The region spanning 29–88 (GGCTHLGQEYADRDVWKPEPCQICVCDSGSVLCDDIICDDQELDCPNPEIPLGECCPVCP) is the VWFC domain. Disordered regions lie at residues 95–143 (TELP…CPSI) and 160–1000 (GSVG…GGVA). Residues 102 to 118 (GPKGDPGSPGSPGRTGA) are compositionally biased toward low complexity. Pro residues predominate over residues 119–134 (PGPPGQPGSPGAPGPP). The nonhelical region (N-terminal) stretch occupies residues 145-164 (GGSFSPQYDSYDVKAGSVGM). The segment at 165-994 (GYPPQPISGF…PGPSGPPGPC (830 aa)) is triple-helical region. A compositionally biased stretch (pro residues) spans 167–190 (PPQPISGFPGPPGPSGPPGPPGHA). Positions 192-201 (PPGSNGYQGP) are enriched in low complexity. Over residues 202–216 (PGEPGQPGPSGPPGP) the composition is skewed to pro residues. Basic and acidic residues predominate over residues 228 to 240 (KDGEPGRPGRNGD). Low complexity predominate over residues 253 to 264 (PGMPGMPGMKGA). At Lys262 the chain carries 5-hydroxylysine. Residues 265–274 (RGFDGKDGAK) are compositionally biased toward basic and acidic residues. Low complexity-rich tracts occupy residues 276-295 (DSGA…NGSP) and 339-376 (TAGF…QGQA). Lys283 is subject to 5-hydroxylysine. Residues 389 to 414 (GSPGGKGEMGPSGIPGGPGPPGGRGL) are compositionally biased toward gly residues. Low complexity-rich tracts occupy residues 534–549 (MRGL…SDGK) and 631–640 (PGPSGSPGLQ). Gly residues predominate over residues 641–650 (GLPGGPGPAG). Low complexity predominate over residues 672–684 (PKGENGIPGERGP). Positions 692–701 (GARGGPGPAG) are enriched in gly residues. Low complexity-rich tracts occupy residues 723-738 (LQGM…SPGP), 781-790 (TGPAGAPGPA), 802-817 (QGLP…PGQN), and 828-838 (PPGLRGEAGPP). Lys859 bears the 5-hydroxylysine mark. The span at 863–872 (GSPGGPGAAG) shows a compositional bias: gly residues. A compositionally biased stretch (pro residues) spans 895–904 (PGVPGPPGHP). The span at 927-940 (PQGAIGSPGASGAR) shows a compositional bias: low complexity. Residues 976–993 (AGPPGQPGLPGPSGPPGP) are compositionally biased toward pro residues. The tract at residues 995–1003 (CGGGVASLG) is nonhelical region (C-terminal). Residues 1018–1262 (DEPKENEINL…GVDVGPVCFL (245 aa)) constitute a propeptide, C-terminal propeptide. The Fibrillar collagen NC1 domain occupies 1028 to 1262 (GEIMSSMKSI…GVDVGPVCFL (235 aa)). Intrachain disulfides connect Cys1058-Cys1090, Cys1098-Cys1260, and Cys1168-Cys1213. Residues Asp1076, Asn1078, Gln1079, Cys1081, and Asp1084 each coordinate Ca(2+). The N-linked (GlcNAc...) asparagine glycan is linked to Asn1163.

It belongs to the fibrillar collagen family. Trimers of identical alpha 1(III) chains. The chains are linked to each other by interchain disulfide bonds. Trimers are also cross-linked via hydroxylysines. In terms of processing, prolines at the third position of the tripeptide repeating unit (G-X-Y) are hydroxylated in some or all of the chains.

Its subcellular location is the secreted. It is found in the extracellular space. The protein localises to the extracellular matrix. In terms of biological role, collagen type III occurs in most soft connective tissues along with type I collagen. The polypeptide is Collagen alpha-1(III) chain (COL3A1) (Gallus gallus (Chicken)).